The following is a 1404-amino-acid chain: DNA-directed RNA polymerase subunit beta' (1404 aa).

Cys-70, Cys-72, Cys-85, and Cys-88 together coordinate Zn(2+). Mg(2+) contacts are provided by Asp-460, Asp-462, and Asp-464. Positions 814, 889, 896, and 899 each coordinate Zn(2+). Positions 1377-1404 (DSEMETLSGKPAAAEPVAAVADAGADEE) are disordered. The span at 1387 to 1404 (PAAAEPVAAVADAGADEE) shows a compositional bias: low complexity.

The protein belongs to the RNA polymerase beta' chain family. In terms of assembly, the RNAP catalytic core consists of 2 alpha, 1 beta, 1 beta' and 1 omega subunit. When a sigma factor is associated with the core the holoenzyme is formed, which can initiate transcription. Mg(2+) serves as cofactor. The cofactor is Zn(2+).

The catalysed reaction is RNA(n) + a ribonucleoside 5'-triphosphate = RNA(n+1) + diphosphate. DNA-dependent RNA polymerase catalyzes the transcription of DNA into RNA using the four ribonucleoside triphosphates as substrates. The polypeptide is DNA-directed RNA polymerase subunit beta' (Xanthomonas euvesicatoria pv. vesicatoria (strain 85-10) (Xanthomonas campestris pv. vesicatoria)).